We begin with the raw amino-acid sequence, 247 residues long: MMIYPTMELLDGRCVTLDKGNLDAPMIWHVDPVETAKGFAEAGAEWMHLTDFNALQGDSSNQDLVEELIRTAGLPIQLGGGIRSREQAEFWIEKGVGRVVIGTMAAYDPAAVAELAKYYPDQVVLAVDVWQGQVMTEGWRKSGAWTPEAFVKAFGNAPFAGILVTDIDSDMSDLDAQLGLISGLAEQAHSPVIASGVVRSKDDISRLKYLPNISGALVGRALFNKTITLEEAMETAQPNPEPVAEFL.

E8 acts as the Proton acceptor in catalysis. The Proton donor role is filled by D128.

This sequence belongs to the HisA/HisF family.

Its subcellular location is the cytoplasm. It catalyses the reaction 1-(5-phospho-beta-D-ribosyl)-5-[(5-phospho-beta-D-ribosylamino)methylideneamino]imidazole-4-carboxamide = 5-[(5-phospho-1-deoxy-D-ribulos-1-ylimino)methylamino]-1-(5-phospho-beta-D-ribosyl)imidazole-4-carboxamide. Its pathway is amino-acid biosynthesis; L-histidine biosynthesis; L-histidine from 5-phospho-alpha-D-ribose 1-diphosphate: step 4/9. In Ruegeria sp. (strain TM1040) (Silicibacter sp.), this protein is 1-(5-phosphoribosyl)-5-[(5-phosphoribosylamino)methylideneamino] imidazole-4-carboxamide isomerase 1.